Reading from the N-terminus, the 373-residue chain is 3-dehydroquinate synthase (373 aa).

Residues 74–79 (DAEAGK), 108–112 (GAATD), 132–133 (TT), Lys-145, Lys-154, and 172–175 (TLET) each bind NAD(+). Positions 187, 250, and 266 each coordinate Zn(2+).

Belongs to the sugar phosphate cyclases superfamily. Dehydroquinate synthase family. The cofactor is Co(2+). It depends on Zn(2+) as a cofactor. NAD(+) is required as a cofactor.

It is found in the cytoplasm. It catalyses the reaction 7-phospho-2-dehydro-3-deoxy-D-arabino-heptonate = 3-dehydroquinate + phosphate. It participates in metabolic intermediate biosynthesis; chorismate biosynthesis; chorismate from D-erythrose 4-phosphate and phosphoenolpyruvate: step 2/7. Catalyzes the conversion of 3-deoxy-D-arabino-heptulosonate 7-phosphate (DAHP) to dehydroquinate (DHQ). The protein is 3-dehydroquinate synthase of Nocardia farcinica (strain IFM 10152).